The primary structure comprises 128 residues: MAYRKLGRTSSQRKAMFRDLTTDLLINESIVTTEARAKEIRKTVEKMITLGKRGNLHARRQAAAFVRNEIASESYDEAKDEYTSTTALQKLFSEIAPRYAERNGGYTRILKTEPRRGDAAPMAIIELV.

It belongs to the bacterial ribosomal protein bL17 family. In terms of assembly, part of the 50S ribosomal subunit. Contacts protein L32.

The polypeptide is Large ribosomal subunit protein bL17 (Streptococcus mutans serotype c (strain ATCC 700610 / UA159)).